Reading from the N-terminus, the 359-residue chain is DNA replication and repair protein RecF (359 aa).

30-37 (GQNAQGKT) contacts ATP.

This sequence belongs to the RecF family.

The protein localises to the cytoplasm. Functionally, the RecF protein is involved in DNA metabolism; it is required for DNA replication and normal SOS inducibility. RecF binds preferentially to single-stranded, linear DNA. It also seems to bind ATP. This chain is DNA replication and repair protein RecF, found in Lactococcus lactis subsp. cremoris (strain MG1363).